The sequence spans 26 residues: Phospholipase A2 homolog A1 (26 aa).

In terms of processing, contains 7 disulfide bonds. As to expression, expressed by the venom gland.

Its subcellular location is the secreted. The chain is Phospholipase A2 homolog A1 from Micrurus pyrrhocryptus (Coral snake).